The chain runs to 173 residues: Terpene cyclase subB (173 aa).

Helical transmembrane passes span 11–31 (PGYL…GLGW), 51–71 (ALMP…IYPF), 112–132 (LPFI…ALAL), and 141–161 (AFSA…QLLS).

This sequence belongs to the paxB family.

Its subcellular location is the membrane. Its pathway is secondary metabolite biosynthesis; terpenoid biosynthesis. In terms of biological role, terpene cyclase; part of the gene cluster that mediates the biosynthesis of the immunosuppressants subglutinols, meroterpenoids consisting of an alpha-pyrone (4-hydroxy-5,6-dimethyl-2-pyrone) moiety attached to a decalin core fused to a five-membered cyclic ether carrying a prenylside chain. The first step of the pathway is the synthesis of the alpha-pyrone moiety by the polyketide synthase subA via condensation of one acetyl-CoA starter unit with 3 malonyl-CoA units and 2 methylations. The alpha-pyrone is then combined with geranylgeranyl pyrophosphate (GGPP) formed by the GGPP synthase subD through the action of the prenyltransferase subC to yield a linear alpha-pyrone diterpenoid. Subsequent steps in the subglutinol biosynthetic pathway involve the decalin core formation, which is thought to be initiated by the epoxidation of the C10-C11 olefin by the FAD-dependent oxidoreductase subE. The following cyclization cascade would be catalyzed by the terpene cyclase subB. Lastly, the FAD-dependent dehydrogenase subF probably catalyzes the five-membered cyclic ether formation to complete the formation of subglutinol A. Subsequent redox reactions appear to give rise to subglutinol C and D, however, it remains unclear which enzymes are responsible for these transformations. SubD may have secondary function in the conversion of the identified subglutinols to subglutinol analog 45, which seems to be the major product of the cluster. This is Terpene cyclase subB from Metarhizium robertsii (strain ARSEF 23 / ATCC MYA-3075) (Metarhizium anisopliae (strain ARSEF 23)).